We begin with the raw amino-acid sequence, 913 residues long: Eukaryotic translation initiation factor 3 subunit C (913 aa).

A disordered region spans residues 1-31; sequence MSRFFANGSDSESESSEEEVQASNFNKANNF. Residues 11 to 20 show a composition bias toward acidic residues; that stretch reads SESESSEEEV. The span at 21-31 shows a compositional bias: polar residues; that stretch reads QASNFNKANNF. Serine 34, serine 165, serine 177, and serine 186 each carry phosphoserine. Disordered stretches follow at residues 157–195 and 208–285; these read FREAPDQESDVDEGEGEAHDSDAERAGADSDGGIGAGTG and PTKV…EDGE. A compositionally biased stretch (acidic residues) spans 162-171; the sequence is DQESDVDEGE. Residues 172–184 are compositionally biased toward basic and acidic residues; that stretch reads GEAHDSDAERAGA. Acidic residues predominate over residues 214 to 239; it reads DEDDSDDSIDWDSDTESETESSEDEN. Over residues 244 to 263 the composition is skewed to basic and acidic residues; that stretch reads MRERFLKRTTEKEDKDDDKR. Residues 264–276 show a composition bias toward basic residues; that stretch reads KDKRKEQKHKVRK. A PCI domain is found at 645–821; it reads FHMHINLELL…ETVVMHRSEP (177 aa). Residues 856-913 form a disordered region; that stretch reads RGNMGNRDRGYNRNQNNQGGNWGGQRRDNRNQRNRNQRGHHKQQQQQQQQQVQTIEEE. Basic residues predominate over residues 887 to 898; the sequence is QRNRNQRGHHKQ.

The protein belongs to the eIF-3 subunit C family. In terms of assembly, component of the eukaryotic translation initiation factor 3 (eIF-3) complex. The eIF-3 complex interacts with pix.

Its subcellular location is the cytoplasm. Its function is as follows. Component of the eukaryotic translation initiation factor 3 (eIF-3) complex, which is involved in protein synthesis of a specialized repertoire of mRNAs and, together with other initiation factors, stimulates binding of mRNA and methionyl-tRNAi to the 40S ribosome. The eIF-3 complex specifically targets and initiates translation of a subset of mRNAs involved in cell proliferation. This Drosophila virilis (Fruit fly) protein is Eukaryotic translation initiation factor 3 subunit C.